A 359-amino-acid polypeptide reads, in one-letter code: Dual-specificity RNA methyltransferase RlmN 1 (359 aa).

The Proton acceptor role is filled by glutamate 96. The region spanning 102-335 (FKGRATVCIS…STVRQRRGID (234 aa)) is the Radical SAM core domain. Residues cysteine 109 and cysteine 340 are joined by a disulfide bond. 3 residues coordinate [4Fe-4S] cluster: cysteine 116, cysteine 120, and cysteine 123. S-adenosyl-L-methionine is bound by residues 166 to 167 (GE), serine 198, 221 to 223 (SLH), and asparagine 297. Cysteine 340 (S-methylcysteine intermediate) is an active-site residue.

It belongs to the radical SAM superfamily. RlmN family. [4Fe-4S] cluster serves as cofactor.

Its subcellular location is the cytoplasm. It carries out the reaction adenosine(2503) in 23S rRNA + 2 reduced [2Fe-2S]-[ferredoxin] + 2 S-adenosyl-L-methionine = 2-methyladenosine(2503) in 23S rRNA + 5'-deoxyadenosine + L-methionine + 2 oxidized [2Fe-2S]-[ferredoxin] + S-adenosyl-L-homocysteine. The catalysed reaction is adenosine(37) in tRNA + 2 reduced [2Fe-2S]-[ferredoxin] + 2 S-adenosyl-L-methionine = 2-methyladenosine(37) in tRNA + 5'-deoxyadenosine + L-methionine + 2 oxidized [2Fe-2S]-[ferredoxin] + S-adenosyl-L-homocysteine. In terms of biological role, specifically methylates position 2 of adenine 2503 in 23S rRNA and position 2 of adenine 37 in tRNAs. m2A2503 modification seems to play a crucial role in the proofreading step occurring at the peptidyl transferase center and thus would serve to optimize ribosomal fidelity. The chain is Dual-specificity RNA methyltransferase RlmN 1 from Myxococcus xanthus (strain DK1622).